A 390-amino-acid polypeptide reads, in one-letter code: Succinyl-diaminopimelate desuccinylase 1 (390 aa).

His76 is a Zn(2+) binding site. Asp78 is an active-site residue. Asp109 contributes to the Zn(2+) binding site. Catalysis depends on Glu143, which acts as the Proton acceptor. Residues Glu144, Glu172, and His363 each contribute to the Zn(2+) site.

Belongs to the peptidase M20A family. DapE subfamily. As to quaternary structure, homodimer. Zn(2+) is required as a cofactor. The cofactor is Co(2+).

The enzyme catalyses N-succinyl-(2S,6S)-2,6-diaminopimelate + H2O = (2S,6S)-2,6-diaminopimelate + succinate. Its pathway is amino-acid biosynthesis; L-lysine biosynthesis via DAP pathway; LL-2,6-diaminopimelate from (S)-tetrahydrodipicolinate (succinylase route): step 3/3. In terms of biological role, catalyzes the hydrolysis of N-succinyl-L,L-diaminopimelic acid (SDAP), forming succinate and LL-2,6-diaminopimelate (DAP), an intermediate involved in the bacterial biosynthesis of lysine and meso-diaminopimelic acid, an essential component of bacterial cell walls. The chain is Succinyl-diaminopimelate desuccinylase 1 from Alteromonas mediterranea (strain DSM 17117 / CIP 110805 / LMG 28347 / Deep ecotype).